Consider the following 229-residue polypeptide: Ribonuclease T (229 aa).

Positions 23–197 (VIIDVETAGF…YDTERTAKLF (175 aa)) constitute an Exonuclease domain. 4 residues coordinate Mg(2+): D26, E28, H184, and D189. Catalysis depends on H184, which acts as the Proton donor/acceptor.

It belongs to the RNase T family. Homodimer. Mg(2+) serves as cofactor.

Its function is as follows. Trims short 3' overhangs of a variety of RNA species, leaving a one or two nucleotide 3' overhang. Responsible for the end-turnover of tRNA: specifically removes the terminal AMP residue from uncharged tRNA (tRNA-C-C-A). Also appears to be involved in tRNA biosynthesis. The sequence is that of Ribonuclease T from Haemophilus influenzae (strain ATCC 51907 / DSM 11121 / KW20 / Rd).